A 483-amino-acid chain; its full sequence is Ero1-like protein (483 aa).

The signal sequence occupies residues Met1–Gly29. Cystine bridges form between Cys44–Cys57, Cys46–Cys55, Cys94–Cys402, Cys103–Cys108, Cys227–Cys251, and Cys405–Cys408. FAD contacts are provided by Arg206, Thr208, and Trp219. N-linked (GlcNAc...) asparagine glycosylation is present at Asn232. Residues Ser262, His265, and Arg301 each coordinate FAD. A glycan (N-linked (GlcNAc...) asparagine) is linked at Asn395.

It belongs to the EROs family. As to quaternary structure, may function both as a monomer and a homodimer. Requires FAD as cofactor.

Its subcellular location is the endoplasmic reticulum membrane. Its function is as follows. Oxidoreductase involved in disulfide bond formation in the endoplasmic reticulum. Efficiently reoxidizes pdi-1, the enzyme catalyzing protein disulfide formation, in order to allow pdi-1 to sustain additional rounds of disulfide formation. Following pdi reoxidation, passes its electrons to molecular oxygen via FAD, leading to the production of reactive oxygen species (ROS) in the cell. This is Ero1-like protein (Ero1L) from Drosophila melanogaster (Fruit fly).